A 107-amino-acid chain; its full sequence is Integration host factor subunit beta (107 aa).

The disordered stretch occupies residues 76-107; that stretch reads FVPHFKPGKELRERVDGRAGEPLKADDPDDDR. Basic and acidic residues predominate over residues 82 to 101; it reads PGKELRERVDGRAGEPLKAD.

The protein belongs to the bacterial histone-like protein family. In terms of assembly, heterodimer of an alpha and a beta chain.

This protein is one of the two subunits of integration host factor, a specific DNA-binding protein that functions in genetic recombination as well as in transcriptional and translational control. In Burkholderia cenocepacia (strain HI2424), this protein is Integration host factor subunit beta.